Consider the following 184-residue polypeptide: ATP synthase subunit b, chloroplastic (184 aa).

Residues 31–53 (LINLAVVIGVLVYFGKGVLTTIL) form a helical membrane-spanning segment.

This sequence belongs to the ATPase B chain family. As to quaternary structure, F-type ATPases have 2 components, F(1) - the catalytic core - and F(0) - the membrane proton channel. F(1) has five subunits: alpha(3), beta(3), gamma(1), delta(1), epsilon(1). F(0) has four main subunits: a(1), b(1), b'(1) and c(10-14). The alpha and beta chains form an alternating ring which encloses part of the gamma chain. F(1) is attached to F(0) by a central stalk formed by the gamma and epsilon chains, while a peripheral stalk is formed by the delta, b and b' chains.

Its subcellular location is the plastid. The protein resides in the chloroplast thylakoid membrane. In terms of biological role, f(1)F(0) ATP synthase produces ATP from ADP in the presence of a proton or sodium gradient. F-type ATPases consist of two structural domains, F(1) containing the extramembraneous catalytic core and F(0) containing the membrane proton channel, linked together by a central stalk and a peripheral stalk. During catalysis, ATP synthesis in the catalytic domain of F(1) is coupled via a rotary mechanism of the central stalk subunits to proton translocation. Component of the F(0) channel, it forms part of the peripheral stalk, linking F(1) to F(0). The sequence is that of ATP synthase subunit b, chloroplastic from Staurastrum punctulatum (Green alga).